A 912-amino-acid polypeptide reads, in one-letter code: GPMGIMGPRGPPGASGAPGPQGFQGPAGEPGEPGQTGPAGARAGEDGHPGKPGRPGERGVVGPQGARGFPGTPGIPGFKGHNGIDGIKGQPGAPGVKGEPGAPGENGTPGQAGARGIPGERGRVGAPGPAGARGSDGSVGPVGPAGPIGSAGPPGFPGAPGPKGEIGPVGNPGPAGPAGPRGEVGIPGISGPVGPPGNPGANGITGAKGAAGIPGVAGAPGIPGPRGIPGPAGAAGATGARGIVGEPGPAGSKGESGNKGEPGAAGPQGPPGPSGEEGKRGPNGEPGSTGPAGPPGIRGIPGADGRAGVMGPAGSRGASGPAGVRGPNGDSGRPGEPGIMGPRGFPGSPGNIGPAGKEGPVGIPGIDGRPGPIGPAGARGEPGNIGFPGPKGPSGEPGKPGDKGDAGIAGARGAPGPDGNNGAQGPPGPQGVQGGKGEQGPAGPPGFQGIPGPAGTAGEVGKPGERGIPGEFGIPGPAGARGPPGESGAAGPAGPIGSRGPSGPPGPDGNKGEPGVIGAPGTAGPSGPSGIPGERGAAGIPGGKGEIGNPGRDGARGAPGAVGAPGPAGANGDRGEAGAAGPAGPAGPRGEVGPAGPNGFAGPAGAAGQPGAKGERGPKGENGPVGPTGPVGAAGPSGPNGPPGPAGSRGDGGPPGVTGFPGAAGRTGPPGPSGISGPPGPPGAAGKGDQGPVGRAGETGASGPPGFAGEKGPSGEPGTAGPPGTPGPQGIIGAPGIIGIPGSRGIPGVAGSIGEPGPIGIAGPPGARGPPGAVGAPGVNGAPGEAGRDGNPGSDGPPGRGYPGNAGPVGAVGAPGPHGPVGPTGKRGEPGPVGSVGPVGAVGPRGPSGPQGVRGHNGIQGIPGIAGQHGDQGAPGSVGPAGPRGPAGPTGPVGKDSGQPGTVGPAGVRGSQ.

Low complexity predominate over residues 1-41 (GPMGIMGPRGPPGASGAPGPQGFQGPAGEPGEPGQTGPAGA). 3 disordered regions span residues 1-206 (GPMG…GITG), 222-739 (IPGP…GIIG), and 763-912 (GPPG…RGSQ). The segment covering 43-57 (AGEDGHPGKPGRPGE) has biased composition (basic and acidic residues). 6 stretches are compositionally biased toward low complexity: residues 124–153 (VGAP…SAGP), 178–192 (AGPR…ISGP), 229–244 (PGPA…RGIV), 295–327 (PGIR…VRGP), 360–382 (PVGI…RGEP), and 406–424 (AGIA…NGAQ). The segment covering 431–440 (GVQGGKGEQG) has biased composition (gly residues). Composition is skewed to low complexity over residues 474-501 (IPGP…SRGP) and 517-532 (IGAP…SGIP). Residues 539 to 548 (GIPGGKGEIG) are compositionally biased toward gly residues. Composition is skewed to low complexity over residues 549-612 (NPGR…QPGA) and 622-637 (NGPV…AGPS). Residues 647-656 (GSRGDGGPPG) show a composition bias toward gly residues. Low complexity-rich tracts occupy residues 658–667 (TGFPGAAGRT), 728–739 (PQGIIGAPGIIG), 763–785 (GPPG…APGE), 805–815 (NAGPVGAVGAP), and 830–850 (PGPV…PSGP).

It belongs to the fibrillar collagen family. In terms of assembly, trimers of one alpha 2(I) and two alpha 1(I) chains. Interacts (via C-terminus) with TMEM131 (via PapD-L domain); the interaction is direct and is involved in assembly and TRAPPIII ER-to-Golgi transport complex-dependent secretion of collagen. Post-translationally, prolines at the third position of the tripeptide repeating unit (G-X-Y) are hydroxylated in some or all of the chains. As to expression, forms the fibrils of tendon, ligaments and bones. In bones, the fibrils are mineralized with calcium hydroxyapatite.

It is found in the secreted. Its subcellular location is the extracellular space. It localises to the extracellular matrix. Type I collagen is a member of group I collagen (fibrillar forming collagen). The protein is Collagen alpha-2(I) chain of Equus sp.